Consider the following 319-residue polypeptide: MKGVFSLNYKPKALNKGDTVGVIAPASPPDPKKLDTALLFLEELGLQVKLGKALKNQHGYLAGQDDERLADLHEMFRDDEVKAVLCACGGFGTGRIAAGIDFSLIRKHPKIFWGYSDITFLHTAIHQNTGLVTFHGPMLSTDIGLDDVHPLTKASYKQLFQETEFTYTEELSPLTELVPGKAEGELVGGNLSLLTSTLGTPFEIDTRGKLLFIEDIDEEPYQIDRMLNQLKMGGKLTDAAGILVCDFHNCVPVKREKSLSLEQVLEDYIISAGRPALRGFKIGHCSPSIAVPIGAKAAMNTAEKTAVIEAGVSEGALKT.

Ser-116 serves as the catalytic Nucleophile. Residues Glu-214 and His-284 each act as charge relay system in the active site.

Belongs to the peptidase S66 family.

It is found in the cytoplasm. The protein operates within cell wall degradation; peptidoglycan degradation. Functionally, may be involved in the degradation of peptidoglycan by catalyzing the cleavage of the terminal D-alanine residue from cytoplasmic murein peptides. The sequence is that of Probable murein peptide carboxypeptidase (ykfA) from Bacillus subtilis (strain 168).